We begin with the raw amino-acid sequence, 701 residues long: Elongation factor G (701 aa).

A tr-type G domain is found at 8–286 (DRVRNIGIIA…AVVLLLPSPL (279 aa)). Residues 17–24 (AHIDAGKT), 85–89 (DTPGH), and 139–142 (NKMD) each bind GTP.

The protein belongs to the TRAFAC class translation factor GTPase superfamily. Classic translation factor GTPase family. EF-G/EF-2 subfamily.

Its subcellular location is the cytoplasm. Catalyzes the GTP-dependent ribosomal translocation step during translation elongation. During this step, the ribosome changes from the pre-translocational (PRE) to the post-translocational (POST) state as the newly formed A-site-bound peptidyl-tRNA and P-site-bound deacylated tRNA move to the P and E sites, respectively. Catalyzes the coordinated movement of the two tRNA molecules, the mRNA and conformational changes in the ribosome. The chain is Elongation factor G from Herpetosiphon aurantiacus (strain ATCC 23779 / DSM 785 / 114-95).